Here is a 415-residue protein sequence, read N- to C-terminus: G-protein coupled receptor daf-38 (415 aa).

A compositionally biased stretch (low complexity) spans 1 to 19 (MLLPSNLTTSTLMTSSSES). The tract at residues 1-25 (MLLPSNLTTSTLMTSSSESYDADNP) is disordered. The Extracellular segment spans residues 1-35 (MLLPSNLTTSTLMTSSSESYDADNPGLPPEPILSD). Residues 36–56 (YVEMFTLVLNFIVGAPLNLAA) form a helical membrane-spanning segment. Residues 57–75 (YTQLSERPTSTRLDLLKRS) lie on the Cytoplasmic side of the membrane. Residues 76–96 (LNYSDLLVLFIYVPSRACWLL) form a helical membrane-spanning segment. Over 97 to 108 (TYDWRGGDALCK) the chain is Extracellular. A disulfide bridge connects residues Cys107 and Cys187. A helical membrane pass occupies residues 109–129 (IVKMFHTFAFQSSSNVIVCIA). Topologically, residues 130 to 152 (VDRLLSVLSPSHHSPNKALKRTK) are cytoplasmic. Residues 153–173 (MMLIVAWIVALVISCPQLFIW) traverse the membrane as a helical segment. Residues 174-222 (KAYLALPEYNWSQCLQIWEIARMEKFNKPQVVPEFDAEFWYSILHISLV) are Extracellular-facing. The helical transmembrane segment at 223-243 (FWIPCIIIMLSYIIVISWVWI) threads the bilayer. The Cytoplasmic segment spans residues 244–345 (NSRPSIRHTS…NLNRSRALRV (102 aa)). The chain crosses the membrane as a helical span at residues 346-366 (SLLLVVAYIICWLPYNLISLI). At 367-382 (QFLDRDFFSSYLKHVH) the chain is on the extracellular side. The chain crosses the membrane as a helical span at residues 383 to 403 (FCQQLIIFNSVVNPWLYGFFG). The Cytoplasmic portion of the chain corresponds to 404 to 415 (PRRPSTTGAGRH).

Belongs to the G-protein coupled receptor 1 family. As to quaternary structure, heterodimer; with daf-37. As to expression, expressed in the ASI and ASK chemosensory neurons and in the IL-2 interneurons, but weakly expressed in other head neurons in hermaphrodites.

It is found in the cell membrane. Its function is as follows. G-protein coupled receptor (GPCR) that forms a heterodimer with daf-37 to control dauer formation and behavior. Required for the response to dauer inducing pheromones such as the ascarosides ascr#2, ascr#3 and ascr#5. This is G-protein coupled receptor daf-38 from Caenorhabditis elegans.